We begin with the raw amino-acid sequence, 527 residues long: Serine/threonine-protein kinase NLK (527 aa).

Sufficient for interaction with DAPK3 stretches follow at residues 1-125 and 124-416; these read MSLC…KAHH and HHHQ…SKRI. Required for interaction with TAB2 regions lie at residues 1 to 304 and 434 to 527; these read MSLC…VVTQ and YHTC…LVWE. Disordered regions lie at residues 22-72 and 90-140; these read AAAA…SSAA and QQPY…DIEP. Basic residues predominate over residues 26–54; it reads GHHHHHHHHLPHLPPPHLHHHHHPQHHLH. Positions 103–119 are enriched in low complexity; sequence PGPAAAAPAQVQAAAAA. Over residues 122-131 the composition is skewed to basic residues; that stretch reads KAHHHQHSHH. In terms of domain architecture, Protein kinase spans 138–427; the sequence is IEPDRPIGYG…AKDALAHPYL (290 aa). Residues 144 to 152 and lysine 167 contribute to the ATP site; that span reads IGYGAFGVV. The active-site Proton acceptor is the aspartate 264. Position 298 is a phosphothreonine; by autocatalysis (threonine 298). The short motif at 298 to 300 is the TQE element; the sequence is TQE. A required for homodimerization and kinase activation and localization to the nucleus region spans residues 428 to 527; sequence DEGRLRYHTC…EMPPSPLVWE (100 aa). A Phosphoserine modification is found at serine 522.

This sequence belongs to the protein kinase superfamily. CMGC Ser/Thr protein kinase family. MAP kinase subfamily. Homodimer. Homodimerization is required for intermolecular autophosphorylation, kinase activation and nuclear localization. May interact with components of cullin-RING-based SCF (SKP1-CUL1-F-box protein) E3 ubiquitin-protein ligase complexes. Interacts with LEF1, MEF2A, MYBL1 and MYBL2. Interacts with the upstream activating kinases HIPK2 and MAP3K7/TAK1. Interaction with MAP3K7/TAK1 seems to be indirect, and may be mediated by other proteins such as STAT3, TAB1 and TAB2. Interacts with and phosphorylates a number of transcription factors including FOXO1, FOXO3, FOXO4, MYB, NOTCH1 and TCF7L2/TCF4. Interacts with DAPK3/ZIPK, and this interaction may disrupt interaction with transcription factors such as TCF7L2/TCF4. Forms a transcriptional repressor complex with CHD7, PPARG and SETDB1. Interacts with RNF138/NARF. Interacts with ATF5; the interaction stabilizes ATF5 at the protein level in a kinase-independent manner. It depends on Mg(2+) as a cofactor. In terms of processing, phosphorylated on Thr-298. Intermolecular autophosphorylation on Thr-298 activates the enzyme.

The protein resides in the nucleus. It localises to the cytoplasm. The enzyme catalyses L-seryl-[protein] + ATP = O-phospho-L-seryl-[protein] + ADP + H(+). The catalysed reaction is L-threonyl-[protein] + ATP = O-phospho-L-threonyl-[protein] + ADP + H(+). With respect to regulation, activated by the non-canonical Wnt signaling pathway, in which WNT5A leads to activation of MAP3K7/TAK1 and HIPK2, which subsequently phosphorylates and activates this protein. Activated by dimerization and subsequent intermolecular autophosphorylation on Thr-298. Other cytokines such as IL6 may also activate this regulatory circuit. Its function is as follows. Serine/threonine-protein kinase that regulates a number of transcription factors with key roles in cell fate determination. Positive effector of the non-canonical Wnt signaling pathway, acting downstream of WNT5A, MAP3K7/TAK1 and HIPK2. Negative regulator of the canonical Wnt/beta-catenin signaling pathway. Binds to and phosphorylates TCF7L2/TCF4 and LEF1, promoting the dissociation of the TCF7L2/LEF1/beta-catenin complex from DNA, as well as the ubiquitination and subsequent proteolysis of LEF1. Together these effects inhibit the transcriptional activation of canonical Wnt/beta-catenin target genes. Negative regulator of the Notch signaling pathway. Binds to and phosphorylates NOTCH1, thereby preventing the formation of a transcriptionally active ternary complex of NOTCH1, RBPJ/RBPSUH and MAML1. Negative regulator of the MYB family of transcription factors. Phosphorylation of MYB leads to its subsequent proteolysis while phosphorylation of MYBL1 and MYBL2 inhibits their interaction with the coactivator CREBBP. Other transcription factors may also be inhibited by direct phosphorylation of CREBBP itself. Acts downstream of IL6 and MAP3K7/TAK1 to phosphorylate STAT3, which is in turn required for activation of NLK by MAP3K7/TAK1. Upon IL1B stimulus, cooperates with ATF5 to activate the transactivation activity of C/EBP subfamily members. Phosphorylates ATF5 but also stabilizes ATF5 protein levels in a kinase-independent manner. Acts as an inhibitor of the mTORC1 complex in response to osmotic stress by mediating phosphorylation of RPTOR, thereby preventing recruitment of the mTORC1 complex to lysosomes. This Canis lupus familiaris (Dog) protein is Serine/threonine-protein kinase NLK (NLK).